Reading from the N-terminus, the 292-residue chain is Protein/nucleic acid deglycase HchA (292 aa).

The span at 1 to 12 (MSQDVNKLSKQP) shows a compositional bias: polar residues. The segment at 1-23 (MSQDVNKLSKQPTPDKAEDNAFF) is disordered. Residue Cys190 is the Nucleophile of the active site.

It belongs to the peptidase C56 family. HchA subfamily.

The protein resides in the cytoplasm. The enzyme catalyses N(omega)-(1-hydroxy-2-oxopropyl)-L-arginyl-[protein] + H2O = lactate + L-arginyl-[protein] + H(+). It catalyses the reaction N(6)-(1-hydroxy-2-oxopropyl)-L-lysyl-[protein] + H2O = lactate + L-lysyl-[protein] + H(+). The catalysed reaction is S-(1-hydroxy-2-oxopropyl)-L-cysteinyl-[protein] + H2O = lactate + L-cysteinyl-[protein] + H(+). It carries out the reaction N(omega)-(1-hydroxy-2-oxoethyl)-L-arginyl-[protein] + H2O = L-arginyl-[protein] + glycolate + H(+). The enzyme catalyses N(6)-(1-hydroxy-2-oxoethyl)-L-lysyl-[protein] + H2O = glycolate + L-lysyl-[protein] + H(+). It catalyses the reaction S-(1-hydroxy-2-oxoethyl)-L-cysteinyl-[protein] + H2O = glycolate + L-cysteinyl-[protein] + H(+). The catalysed reaction is N(2)-(1-hydroxy-2-oxopropyl)-dGTP + H2O = lactate + dGTP + H(+). It carries out the reaction N(2)-(1-hydroxy-2-oxopropyl)-GTP + H2O = lactate + GTP + H(+). The enzyme catalyses N(2)-(1-hydroxy-2-oxopropyl)-GDP + H2O = lactate + GDP + H(+). It catalyses the reaction N(2)-(1-hydroxy-2-oxopropyl)-GMP + H2O = lactate + GMP + H(+). The catalysed reaction is N(2)-(1-hydroxy-2-oxoethyl)-dGTP + H2O = dGTP + glycolate + H(+). It carries out the reaction N(2)-(1-hydroxy-2-oxoethyl)-GTP + H2O = glycolate + GTP + H(+). The enzyme catalyses N(2)-(1-hydroxy-2-oxoethyl)-GDP + H2O = glycolate + GDP + H(+). It catalyses the reaction N(2)-(1-hydroxy-2-oxoethyl)-GMP + H2O = glycolate + GMP + H(+). The catalysed reaction is an N(2)-(1-hydroxy-2-oxopropyl)-guanosine in RNA + H2O = a guanosine in RNA + lactate + H(+). It carries out the reaction an N(2)-(1-hydroxy-2-oxopropyl)-2'-deoxyguanosine in DNA + H2O = a 2'-deoxyguanosine in DNA + lactate + H(+). The enzyme catalyses an N(2)-(1-hydroxy-2-oxoethyl)-guanosine in RNA + H2O = a guanosine in RNA + glycolate + H(+). It catalyses the reaction an N(2)-(1-hydroxy-2-oxoethyl)-2'-deoxyguanosine in DNA + H2O = a 2'-deoxyguanosine in DNA + glycolate + H(+). In terms of biological role, protein and nucleotide deglycase that catalyzes the deglycation of the Maillard adducts formed between amino groups of proteins or nucleotides and reactive carbonyl groups of glyoxals. Thus, functions as a protein deglycase that repairs methylglyoxal- and glyoxal-glycated proteins, and releases repaired proteins and lactate or glycolate, respectively. Deglycates cysteine, arginine and lysine residues in proteins, and thus reactivates these proteins by reversing glycation by glyoxals. Acts on early glycation intermediates (hemithioacetals and aminocarbinols), preventing the formation of Schiff bases and advanced glycation endproducts (AGE). Also functions as a nucleotide deglycase able to repair glycated guanine in the free nucleotide pool (GTP, GDP, GMP, dGTP) and in DNA and RNA. Is thus involved in a major nucleotide repair system named guanine glycation repair (GG repair), dedicated to reversing methylglyoxal and glyoxal damage via nucleotide sanitization and direct nucleic acid repair. Plays an important role in protecting cells from carbonyl stress. The polypeptide is Protein/nucleic acid deglycase HchA (Staphylococcus aureus (strain MRSA252)).